The following is a 648-amino-acid chain: RAF proto-oncogene serine/threonine-protein kinase (648 aa).

A Phosphoserine; by MAPK1 modification is found at Ser29. Ser43 carries the post-translational modification Phosphoserine; by PKA and MAPK1. Residues 56–131 (NTIRVFLPNK…IGEELQVDFL (76 aa)) enclose the RBD domain. The Phorbol-ester/DAG-type zinc-finger motif lies at 138-184 (THNFARKTFLKLAFCDICQKFLLNGFRCQTCGYKFHEHCSTKVPTMC). Positions 139, 152, 155, 165, 168, 173, 176, and 184 each coordinate Zn(2+). The interval 205-265 (GVPAPPSFPM…RSTSTPNVHM (61 aa)) is disordered. The residue at position 233 (Ser233) is a Phosphoserine; by PKA. Residues 239–265 (TFNTSSPSSEGSLSQRQRSTSTPNVHM) are compositionally biased toward polar residues. At Ser252 the chain carries Phosphoserine. Position 259 is a phosphoserine; by PKA, PKC and PKB/AKT1 (Ser259). Thr268 bears the Phosphothreonine; by autocatalysis mark. Thr269 is subject to Phosphothreonine; by PKA. Residues 281 to 335 (IRSHSESASPSALSSSPNNLSPTGWSQPKTPVPAQRERAPGSGTQEKNKIRPRGQ) form a disordered region. The segment covering 286 to 301 (ESASPSALSSSPNNLS) has biased composition (low complexity). Residues Ser289, Ser296, and Ser301 each carry the phosphoserine; by MAPK1 modification. Residues 331-349 (RPRGQRDSSYYWEIEASEV) form an interaction with PEBP1/RKIP region. At Ser338 the chain carries Phosphoserine; by PAK1, PAK2, PAK3 and PAK5. Position 339 is a phosphoserine; by PAK1, PAK2 and PAK3 (Ser339). A phosphotyrosine; by SRC mark is found at Tyr340 and Tyr341. One can recognise a Protein kinase domain in the interval 349 to 609 (VMLSTRIGSG…PQILSSIELL (261 aa)). ATP-binding positions include 355–363 (IGSGSFGTV) and Lys375. Asp468 (proton acceptor) is an active-site residue. Position 471 is a phosphoserine (Ser471). Thr491 is modified (phosphothreonine). Ser494 bears the Phosphoserine mark. Phosphoserine; by PKC is present on residues Ser497 and Ser499. Residue Arg563 is modified to Symmetric dimethylarginine; by PRMT5. Position 621 is a phosphoserine (Ser621). Ser642 carries the phosphoserine; by MAPK1 modification.

This sequence belongs to the protein kinase superfamily. TKL Ser/Thr protein kinase family. RAF subfamily. As to quaternary structure, monomer. Homodimer. Heterodimerizes with BRAF and this heterodimer possesses a highly increased kinase activity compared to the respective homodimers or monomers. Heterodimerization is mitogen-regulated and enhanced by 14-3-3 proteins. MAPK1/ERK2 activation can induce a negative feedback that promotes the dissociation of the heterodimer. Forms a multiprotein complex with Ras (M-Ras/MRAS), SHOC2 and protein phosphatase 1 (PPP1CA, PPP1CB and PPP1CC). Interacts with LZTR1. Interacts with Ras proteins; the interaction is antagonized by RIN1. Weakly interacts with RIT1. Interacts (via N-terminus) with RGS14 (via RBD domains); the interaction mediates the formation of a ternary complex with BRAF, a ternary complex inhibited by GNAI1. Probably forms a complex composed of chaperones HSP90 and HSP70, co-chaperones CDC37, PPP5C, TSC1 and client protein TSC2, CDK4, AKT, RAF1 and NR3C1; this complex does not contain co-chaperones STIP1/HOP and PTGES3/p23. Interacts with STK3/MST2; the interaction inhibits its pro-apoptotic activity. Interacts (when phosphorylated at Ser-259) with YWHAZ (unphosphorylated at 'Thr-232'). Interacts with MAP2K1/MEK1 and MAP2K2/MEK2. Interacts with MAP3K5/ASF1 (via N-terminus) and this interaction inhibits the proapoptotic function of MAP3K5/ASK1. Interacts with PAK1 (via kinase domain). The Ser-338 and Ser-339 phosphorylated form (by PAK1) interacts with BCL2. Interacts with PEBP1/RKIP and this interaction is enhanced if RAF1 is phosphorylated on residues Ser-338, Ser-339, Tyr-340 and Tyr-341. Interacts with ADCY2, ADCY5, ADCY6, DGKH, RCAN1/DSCR1, PPP1R12A, PKB/AKT1, SPRY2, SPRY4, CNKSR1/CNK1, KSR2 and PHB/prohibitin. The phosphorylated form interacts with PIN1. Interacts with PPP2CA, PPP2R1B and ROCK2. In its active form, interacts with PRMT5. Interacts with FAM83B; displaces 14-3-3 proteins from RAF1 and activates RAF1. Interacts with PDE8A; the interaction promotes RAF1 activity. Interacts with MFHAS1. Interacts with GLS. Interacts with NEK10 and MAP2K1; the interaction is direct with NEK10 and required for ERK1/2-signaling pathway activation in response to UV irradiation. It depends on Zn(2+) as a cofactor. Post-translationally, phosphorylation at Thr-269, Ser-338, Tyr-341, Thr-491 and Ser-494 results in its activation. Phosphorylation at Ser-29, Ser-43, Ser-289, Ser-296, Ser-301 and Ser-642 by MAPK1/ERK2 results in its inactivation. Phosphorylation at Ser-259 induces the interaction with YWHAZ and inactivates kinase activity. Dephosphorylation of Ser-259 by the SHOC2-MRAS-PP1c (SMP) complex consisting of SHOC2, GTP-bound M-Ras/MRAS and the catalytic subunit of protein phosphatase 1 (PPP1CA, PPP1CB or PPP1CC); this relieves inactivation and stimulates kinase activity. Phosphorylation at Ser-338 by PAK1 and PAK5 and Ser-339 by PAK1 is required for its mitochondrial localization. Phosphorylation at Ser-621 in response to growth factor treatment stabilizes the protein, possibly by preventing proteasomal degradation. Phosphorylation at Ser-289, Ser-296, Ser-301, Ser-338 and Ser-621 are somehow linked to the methylation potential of cells. Treatment of cells with HGF in the presence of the methylation inhibitor 5'-methylthioadenosine (MTA) results in increased phosphorylation at Ser-338 and Ser-621 and decreased phosphorylation at Ser-296, Ser-301 and Ser-338. Dephosphorylation at Ser-338 by PPP5C results in a decreased of activity. In terms of processing, methylated at Arg-563 in response to EGF treatment. This modification leads to destabilization of the protein, possibly through proteasomal degradation. Present in all tissues tested: testis, ovary, small intestine, colon, peripheral blood leukocytes, fetal liver, bone marrow, thymus, lymph node and spleen, and the cell lines melanoma G-361, lung carcinoma A-549, colorectal adenocarcinoma SW480, Burkitt's lymphoma Raji and lymphoblastic leukemia MOLT-4. In skeletal muscle, isoform 1 is more abundant than isoform 2.

The protein localises to the cytoplasm. It is found in the cell membrane. Its subcellular location is the mitochondrion. It localises to the nucleus. It carries out the reaction L-seryl-[protein] + ATP = O-phospho-L-seryl-[protein] + ADP + H(+). It catalyses the reaction L-threonyl-[protein] + ATP = O-phospho-L-threonyl-[protein] + ADP + H(+). Regulation is a highly complex process involving membrane recruitment, protein-protein interactions, dimerization, and phosphorylation/dephosphorylation events. Ras-GTP recruits RAF1 to the membrane, thereby promoting its activation. The inactive conformation of RAF1 is maintained by autoinhibitory interactions occurring between the N-terminal regulatory and the C-terminal catalytic domains and by the binding of a 14-3-3 protein that contacts two phosphorylation sites, Ser-259 and Ser-621. Upon mitogenic stimulation, Ras and PPP2R1A cooperate to release autoinhibition and the subsequent phosphorylation of activating sites: Ser-338, Tyr-341, Thr-491, and Ser-494, yields a fully active kinase. Through a negative feedback mechanism involving MAPK1/ERK2, RAF1 is phosphorylated on Ser-29, Ser-43, Ser-289, Ser-296, Ser-301 and Ser-642 by MAPK1/ERK2, which yields an inactive, desensitized kinase. The signaling-competent conformation of RAF1 is finally re-established by the coordinated action of PIN1, a prolyl isomerase that converts pSer and pThr residues from the cis to the trans conformation, which is preferentially recognized and dephosphorylated by PPP2R1A. Activated by homodimerization and heterodimerization (with BRAF). Also regulated through association with other proteins such as KSR2, CNKSR1/CNK1, PEBP1/RKIP, PHB/prohibitin and SPRY4. PEBP1/RKIP acts by dissociating RAF1 from its substrates MAP2K1/MEK1 and MAP2K2/MEK2. PHB/prohibitin facilitates the displacement of 14-3-3 from RAF1 by activated Ras, thereby promoting cell membrane localization and phosphorylation of RAF1 at the activating Ser-338. SPRY4 inhibits Ras-independent, but not Ras-dependent, activation of RAF1. CNKSR1/CNK1 regulates Src-mediated RAF1 activation. Its function is as follows. Serine/threonine-protein kinase that acts as a regulatory link between the membrane-associated Ras GTPases and the MAPK/ERK cascade, and this critical regulatory link functions as a switch determining cell fate decisions including proliferation, differentiation, apoptosis, survival and oncogenic transformation. RAF1 activation initiates a mitogen-activated protein kinase (MAPK) cascade that comprises a sequential phosphorylation of the dual-specific MAPK kinases (MAP2K1/MEK1 and MAP2K2/MEK2) and the extracellular signal-regulated kinases (MAPK3/ERK1 and MAPK1/ERK2). The phosphorylated form of RAF1 (on residues Ser-338 and Ser-339, by PAK1) phosphorylates BAD/Bcl2-antagonist of cell death at 'Ser-75'. Phosphorylates adenylyl cyclases: ADCY2, ADCY5 and ADCY6, resulting in their activation. Phosphorylates PPP1R12A resulting in inhibition of the phosphatase activity. Phosphorylates TNNT2/cardiac muscle troponin T. Can promote NF-kB activation and inhibit signal transducers involved in motility (ROCK2), apoptosis (MAP3K5/ASK1 and STK3/MST2), proliferation and angiogenesis (RB1). Can protect cells from apoptosis also by translocating to the mitochondria where it binds BCL2 and displaces BAD/Bcl2-antagonist of cell death. Plays a role in the oncogenic transformation of epithelial cells via repression of the TJ protein, occludin (OCLN) by inducing the up-regulation of a transcriptional repressor SNAI2/SLUG, which induces down-regulation of OCLN. Restricts caspase activation in response to selected stimuli, notably Fas stimulation, pathogen-mediated macrophage apoptosis, and erythroid differentiation. Regulates Rho signaling and migration, and is required for normal wound healing. This Mus musculus (Mouse) protein is RAF proto-oncogene serine/threonine-protein kinase (Raf1).